The sequence spans 182 residues: Putative minor fimbrial subunit PmfF (182 aa).

The first 22 residues, 1–22 (MKNSIIKSAITCLLLLSPSTFA), serve as a signal peptide directing secretion.

The protein belongs to the fimbrial protein family.

It localises to the fimbrium. The polypeptide is Putative minor fimbrial subunit PmfF (pmfF) (Proteus mirabilis (strain HI4320)).